We begin with the raw amino-acid sequence, 455 residues long: SVGFKAGVKDYKLTYYTPDYETKDTDILAAFRVTPQPGVPPEEAGAAVAAESSTGTWTTVWTDGLTSLDRYKGRCYHIEPVAGEENQFIAYVAYPLDLFEEGSVTNMFTSIVGNVFGFKALRALRLEDLRIPTAYTKTFQGPPHGIQVERDKLNKYGRPLLGCTIKPKLGLSAKNYGRAVYECLRGGLDFTKDDENVNSQPFMRWRDRFLFCAEALFKAQAETGEIKGHYLNATAGTCEEMMKRAMCARELGVPIVMHDYLTGGFTANTTLAHYCRDNGLLLHIHRAMHAVIDRQKNHGMHFRVLAKALRLSGGDHIHAGTVVGKLEGEREITLGFVDLLRDDYVEKDRSRGIYFTQDWVSLPGVIPVASGGIHVWHMPALTEIFGDDSVLQFGGGTLGHPWGNAPGAVANRVALEACVQARNEGRDLAREGNEIIREASKWSPELAAACEVWKE.

Position 5 is an N6,N6,N6-trimethyllysine (lysine 5). 2 residues coordinate substrate: asparagine 114 and threonine 164. Lysine 166 acts as the Proton acceptor in catalysis. Substrate is bound at residue lysine 168. Residues lysine 192, aspartate 194, and glutamate 195 each coordinate Mg(2+). An N6-carboxylysine modification is found at lysine 192. Residue histidine 285 is the Proton acceptor of the active site. Substrate contacts are provided by arginine 286, histidine 318, and serine 370.

Belongs to the RuBisCO large chain family. Type I subfamily. As to quaternary structure, heterohexadecamer of 8 large chains and 8 small chains; disulfide-linked. The disulfide link is formed within the large subunit homodimers. Requires Mg(2+) as cofactor. In terms of processing, the disulfide bond which can form in the large chain dimeric partners within the hexadecamer appears to be associated with oxidative stress and protein turnover.

Its subcellular location is the plastid. The protein localises to the chloroplast. It carries out the reaction 2 (2R)-3-phosphoglycerate + 2 H(+) = D-ribulose 1,5-bisphosphate + CO2 + H2O. The catalysed reaction is D-ribulose 1,5-bisphosphate + O2 = 2-phosphoglycolate + (2R)-3-phosphoglycerate + 2 H(+). Functionally, ruBisCO catalyzes two reactions: the carboxylation of D-ribulose 1,5-bisphosphate, the primary event in carbon dioxide fixation, as well as the oxidative fragmentation of the pentose substrate in the photorespiration process. Both reactions occur simultaneously and in competition at the same active site. This is Ribulose bisphosphate carboxylase large chain from Vachellia farnesiana (Sweet acacia).